An 81-amino-acid polypeptide reads, in one-letter code: Small ribosomal subunit protein bS16 (81 aa).

This sequence belongs to the bacterial ribosomal protein bS16 family.

The sequence is that of Small ribosomal subunit protein bS16 from Coprothermobacter proteolyticus (strain ATCC 35245 / DSM 5265 / OCM 4 / BT).